A 393-amino-acid chain; its full sequence is Probable chromate transport protein (393 aa).

10 helical membrane-spanning segments follow: residues 22–42, 90–110, 119–139, 146–166, 201–221, 231–251, 261–281, 282–302, 327–347, and 370–390; these read YFLKLGALGFGGPIALVGYMH, ALVGLAFVLPSFLIVVALGWA, WMQAVFYGVGAAVIGIIAISA, TVGTSWLLWSIYLVNAATTIV, FIGLPLIPLFAAVPTATTSLL, AGAFVFGSGLAIVPFLYGGVV, QFLDAVAVAMITPGPVVITTG, FIGFLVAGFPGACVAAIAMFI, FVNGVTVAATGAIAGAVVVLG, and LGKKLPEPLIIVIAAIAGVIF.

The protein belongs to the chromate ion transporter (CHR) (TC 2.A.51) family.

It localises to the cell membrane. Its function is as follows. May function in the active transport of chromate into the cell under sulfur-deficient conditions. In Synechococcus elongatus (strain ATCC 33912 / PCC 7942 / FACHB-805) (Anacystis nidulans R2), this protein is Probable chromate transport protein (srpC).